We begin with the raw amino-acid sequence, 446 residues long: Tubulin beta-1 chain (446 aa).

The GTP site is built by Gln-13, Glu-71, Ser-140, Gly-144, Thr-145, Gly-146, Asn-206, and Asn-228. Glu-71 serves as a coordination point for Mg(2+). The disordered stretch occupies residues Val-421–Glu-446. Residues Ser-431–Glu-446 show a composition bias toward acidic residues.

Belongs to the tubulin family. In terms of assembly, dimer of alpha and beta chains. A typical microtubule is a hollow water-filled tube with an outer diameter of 25 nm and an inner diameter of 15 nM. Alpha-beta heterodimers associate head-to-tail to form protofilaments running lengthwise along the microtubule wall with the beta-tubulin subunit facing the microtubule plus end conferring a structural polarity. Microtubules usually have 13 protofilaments but different protofilament numbers can be found in some organisms and specialized cells. It depends on Mg(2+) as a cofactor.

It localises to the cytoplasm. The protein localises to the cytoskeleton. Functionally, tubulin is the major constituent of microtubules, a cylinder consisting of laterally associated linear protofilaments composed of alpha- and beta-tubulin heterodimers. Microtubules grow by the addition of GTP-tubulin dimers to the microtubule end, where a stabilizing cap forms. Below the cap, tubulin dimers are in GDP-bound state, owing to GTPase activity of alpha-tubulin. The protein is Tubulin beta-1 chain (tub1) of Hypocrea rufa (Trichoderma viride).